Reading from the N-terminus, the 66-residue chain is Prokaryotic ubiquitin-like protein Pup (66 aa).

Residues 1-10 (MAGQEQQSSS) show a composition bias toward low complexity. The interval 1–39 (MAGQEQQSSSPREEEHEVADAPVPVPSSPQASAHTDGVD) is disordered. The ARC ATPase binding stretch occupies residues 23–60 (VPVPSSPQASAHTDGVDDLLDEIDGVLESNAEEFVRGF). Deamidated glutamine is present on Gln-66. Gln-66 participates in a covalent cross-link: Isoglutamyl lysine isopeptide (Gln-Lys) (interchain with K-? in acceptor proteins).

It belongs to the prokaryotic ubiquitin-like protein family. As to quaternary structure, strongly interacts with the proteasome-associated ATPase ARC through a hydrophobic interface; the interacting region of Pup lies in its C-terminal half. There is one Pup binding site per ARC hexamer ring. Post-translationally, is modified by deamidation of its C-terminal glutamine to glutamate by the deamidase Dop, a prerequisite to the subsequent pupylation process.

It participates in protein degradation; proteasomal Pup-dependent pathway. In terms of biological role, protein modifier that is covalently attached to lysine residues of substrate proteins, thereby targeting them for proteasomal degradation. The tagging system is termed pupylation. The chain is Prokaryotic ubiquitin-like protein Pup from Renibacterium salmoninarum (strain ATCC 33209 / DSM 20767 / JCM 11484 / NBRC 15589 / NCIMB 2235).